We begin with the raw amino-acid sequence, 1123 residues long: RNA-binding protein 6 (1123 aa).

2 disordered regions span residues 1 to 391 (MWGD…EGGL) and 413 to 454 (LPGS…EEKP). Residue S17 is modified to Phosphoserine. A Glycyl lysine isopeptide (Lys-Gly) (interchain with G-Cter in SUMO2) cross-link involves residue K36. Residues 79–97 (DGPHGDYRGGEGPGHDFRG) show a composition bias toward basic and acidic residues. Over residues 98-114 (GDFSSSDFQSRDSSQLD) the composition is skewed to low complexity. Composition is skewed to basic and acidic residues over residues 115–131 (FRGR…REGP) and 145–237 (YRGR…DFRG). The residue at position 240 (S240) is a Phosphoserine. Basic and acidic residues-rich tracts occupy residues 245-286 (LDFR…REMP) and 301-323 (QDRE…HTIE). K331 is covalently cross-linked (Glycyl lysine isopeptide (Lys-Gly) (interchain with G-Cter in SUMO2)). Over residues 332-354 (GEFEHSETREGETQGVAFEHESP) the composition is skewed to basic and acidic residues. The residue at position 344 (T344) is a Phosphothreonine. Positions 356 to 365 (DFQNSQSPVQ) are enriched in polar residues. S360 and S362 each carry phosphoserine. Composition is skewed to basic and acidic residues over residues 366–391 (DQDK…EGGL) and 431–454 (KTAR…EEKP). Glycyl lysine isopeptide (Lys-Gly) (interchain with G-Cter in SUMO2) cross-links involve residues K386, K453, K469, and K569. In terms of domain architecture, RRM spans 456-536 (RLIRLSGVPE…KEVTLEYVSS (81 aa)). Disordered regions lie at residues 574-654 (TYPQ…QDGE), 741-787 (KRRN…QSSS), and 827-948 (EEEI…EEDK). Composition is skewed to basic and acidic residues over residues 597–654 (PADK…QDGE) and 742–754 (RRND…DHMH). A compositionally biased stretch (polar residues) spans 772 to 787 (SDWSSDTNRQGQQSSS). The segment covering 843–860 (SKKEMSKRDGKEKKDRGV) has biased composition (basic and acidic residues). Glycyl lysine isopeptide (Lys-Gly) (interchain with G-Cter in SUMO2) cross-links involve residues K871, K879, and K887. Residue S891 is modified to Phosphoserine. Residues 910–922 (GDSDYEEEEEEEQ) are compositionally biased toward acidic residues. Residues 934–948 (QKREEQTKKENEEDK) show a composition bias toward basic and acidic residues. Residues K935, K948, K991, and K1019 each participate in a glycyl lysine isopeptide (Lys-Gly) (interchain with G-Cter in SUMO2) cross-link. Over residues 1004–1051 (EREGKFKGRGNDRREKLQSFDSPERKRIKYSRETDSDRKLVDKEDIDT) the composition is skewed to basic and acidic residues. The tract at residues 1004-1106 (EREGKFKGRG…RTSKRQSNET (103 aa)) is disordered. A phosphoserine mark is found at S1022 and S1025. Glycyl lysine isopeptide (Lys-Gly) (interchain with G-Cter in SUMO2) cross-links involve residues K1042, K1046, and K1066. Positions 1051–1097 (TSSKGGCVQQATGWRKGTGLGYGHPGLASSEEAEGRMRGPSVGASGR) constitute a G-patch domain.

May interact with FAM168B. In terms of tissue distribution, ubiquitous in adults.

The protein localises to the nucleus. Specifically binds poly(G) RNA homopolymers in vitro. The sequence is that of RNA-binding protein 6 (RBM6) from Homo sapiens (Human).